The primary structure comprises 303 residues: Probable cell division protein WhiA (303 aa).

Residues 272 to 303 (SIQQLADSLSKPLTKSGVNHRLRKINKIADEL) constitute a DNA-binding region (H-T-H motif).

It belongs to the WhiA family.

Involved in cell division and chromosome segregation. The protein is Probable cell division protein WhiA of Streptococcus gordonii (strain Challis / ATCC 35105 / BCRC 15272 / CH1 / DL1 / V288).